The sequence spans 653 residues: Phospholipid-transporting ATPase VD (653 aa).

Residues Met1–Asn375 are Cytoplasmic-facing. Residues Glu14, Phe56, Lys80, Arg124, Thr204, Gly205, Asp206, Gly259 to Thr266, Arg293, and Lys299 each bind ATP. Mg(2+) is bound at residue Asp319. The ATP site is built by Asn322 and Asp323. Asp323 contacts Mg(2+). The chain crosses the membrane as a helical span at residues Met376–Phe396. Topologically, residues Phe397–Asp407 are exoplasmic loop. The helical transmembrane segment at Tyr408–Val428 threads the bilayer. The Cytoplasmic portion of the chain corresponds to Leu429 to Thr458. The helical transmembrane segment at Phe459–Thr480 threads the bilayer. At Tyr481–Asp487 the chain is on the exoplasmic loop side. The chain crosses the membrane as a helical span at residues Ile488 to Glu510. Residues Ser511–Trp516 lie on the Cytoplasmic side of the membrane. Residues Ile517–Gly537 traverse the membrane as a helical segment. At Ala538–Glu555 the chain is on the exoplasmic loop side. The helical transmembrane segment at His556–Tyr580 threads the bilayer. The Cytoplasmic portion of the chain corresponds to Arg581 to Asp653.

Belongs to the cation transport ATPase (P-type) (TC 3.A.3) family. Type IV subfamily. Component of a P4-ATPase flippase complex which consists of a catalytic alpha subunit ATP10A and an accessory beta subunit TMEM30A. The cofactor is Mg(2+). In terms of processing, autophosphorylated at the conserved aspartate of the P-type ATPase signature sequence.

It localises to the cell membrane. Its subcellular location is the endoplasmic reticulum membrane. It catalyses the reaction ATP + H2O + phospholipidSide 1 = ADP + phosphate + phospholipidSide 2.. The enzyme catalyses a beta-D-glucosyl-(1&lt;-&gt;1')-N-acylsphing-4-enine(out) + ATP + H2O = a beta-D-glucosyl-(1&lt;-&gt;1')-N-acylsphing-4-enine(in) + ADP + phosphate + H(+). Catalytic component of a P4-ATPase flippase complex, which catalyzes the hydrolysis of ATP coupled to the transport of glucosylceramide (GlcCer) from the outer to the inner leaflet of the plasma membrane. This is Phospholipid-transporting ATPase VD (ATP10D) from Macaca fascicularis (Crab-eating macaque).